The chain runs to 200 residues: Large ribosomal subunit protein bL25 (200 aa).

It belongs to the bacterial ribosomal protein bL25 family. CTC subfamily. In terms of assembly, part of the 50S ribosomal subunit; part of the 5S rRNA/L5/L18/L25 subcomplex. Contacts the 5S rRNA. Binds to the 5S rRNA independently of L5 and L18.

This is one of the proteins that binds to the 5S RNA in the ribosome where it forms part of the central protuberance. This is Large ribosomal subunit protein bL25 from Nocardia farcinica (strain IFM 10152).